The chain runs to 36 residues: Photosystem I reaction center subunit VIII (36 aa).

Residues 6 to 28 form a helical membrane-spanning segment; the sequence is LPSIFVPLVGLLFPAIAMVSLFF.

This sequence belongs to the PsaI family.

The protein resides in the plastid. The protein localises to the chloroplast thylakoid membrane. Its function is as follows. May help in the organization of the PsaL subunit. The protein is Photosystem I reaction center subunit VIII of Nymphaea alba (White water-lily).